We begin with the raw amino-acid sequence, 1150 residues long: BAI1-associated protein 3 (1150 aa).

Positions 22–44 (RRKTEQEPEVTNSQEPPTGAWKP) are disordered. One can recognise a C2 1 domain in the interval 139–298 (SSEEHMEAIM…VKSARANGTA (160 aa)). Residues Asp174 and Asp180 each contribute to the Ca(2+) site. The segment at 193–214 (APQEPSGQKEQRFGFRKGSKRS) is disordered. Positions 258 and 260 each coordinate Ca(2+). Positions 626-747 (FELYLTLADT…EASLFYTELL (122 aa)) constitute an MHD1 domain. The MHD2 domain maps to 851 to 959 (DEAVAPLLKY…CSTRECIEQF (109 aa)). The 127-residue stretch at 973-1099 (RFGRLTVRCH…GIARPHVGGG (127 aa)) folds into the C2 2 domain. Ca(2+) is bound by residues Leu1003, Asp1004, Asp1010, Asp1068, Asp1070, Ser1073, and Asp1076.

This sequence belongs to the unc-13 family. As to quaternary structure, interacts with ADGRB1, this interaction is direct. Interacts with endosomal SNARE proteins VAMP3, VAMP4, STX6 and STX16; this interaction is increased in the presence of calcium. Requires Ca(2+) as cofactor. In terms of tissue distribution, prominently expressed in brain structures including hypothalamus, amygdala, stria terminalis and periaqueductal gray (at protein level). Expressed in nonneuronal tissues, including placenta, lung, pancreas, spleen, and testes. Within placenta, expression is restricted to the syncytiotrophoblasts.

The protein resides in the cytoplasm. It localises to the cytosol. Its subcellular location is the recycling endosome membrane. The protein localises to the late endosome membrane. It is found in the golgi apparatus. The protein resides in the trans-Golgi network membrane. It localises to the cell membrane. Functions in endosome to Golgi retrograde transport. In response to calcium influx, may interact with SNARE fusion receptors and membrane phospholipids to mediate endosome fusion with the trans-Golgi network. By promoting the recycling of secretory vesicle transmembrane proteins, it indirectly controls dense-core secretory vesicle biogenesis, maturation and their ability to mediate the constitutive and regulated secretion of neurotransmitters and hormones. May regulate behavior and food intake by controlling calcium-stimulated exocytosis of neurotransmitters including NPY and serotonin and hormones like insulin. Proposed to play a role in hypothalamic neuronal firing by modulating gamma-aminobutyric acid (GABA)ergic inhibitory neurotransmission. In Mus musculus (Mouse), this protein is BAI1-associated protein 3.